A 310-amino-acid polypeptide reads, in one-letter code: S-adenosylmethionine-dependent nucleotide dehydratase (310 aa).

One can recognise a Radical SAM core domain in the interval 3–221; it reads PAIPPTINLH…VERHRKVESS (219 aa). Residues Cys17, Cys21, and Cys24 each coordinate [4Fe-4S] cluster.

The protein belongs to the radical SAM superfamily. Viperin family. [4Fe-4S] cluster serves as cofactor.

It carries out the reaction GTP + AH2 + S-adenosyl-L-methionine = 3'-deoxy-3',4'-didehydro-GTP + 5'-deoxyadenosine + L-methionine + A + H2O + H(+). Functionally, expression of pVip15 in E.coli (strain MG1655) confers resistance to phage T7; prevents culture collapse upon infection. Catalyzes the conversion of guanosine triphosphate (GTP) to 3'-deoxy-3',4'-didehydro-GTP (ddhGTP), probably via a SAM-dependent radical mechanism. The modified nucleotide represses transcription from T7 RNA polymerase-directed genes (possibly by acting as chain terminators), strongly suggesting these nucleotides block viral polymerase transcription. This is S-adenosylmethionine-dependent nucleotide dehydratase from Coraliomargarita akajimensis (strain DSM 45221 / IAM 15411 / JCM 23193 / KCTC 12865 / 04OKA010-24).